A 311-amino-acid chain; its full sequence is E3 ubiquitin-protein ligase RNF126 (311 aa).

A2 bears the N-acetylalanine mark. Position 5 is a phosphoserine (S5). A required for interaction with BAG6 region spans residues 5–100 (SPHPGRYFCH…FEIPTFPPGA (96 aa)). C13, C16, C29, and C32 together coordinate Zn(2+). The C4-type zinc finger occupies 13–32 (CHCCSVEIVPRLPDYICPRC). Disordered stretches follow at residues 42–64 (EETR…SRPP) and 94–132 (PTFP…ARLT). Polar residues predominate over residues 47–61 (TENGSAPSTAPTDQS). The span at 103–116 (DDGRDPESRRERDH) shows a compositional bias: basic and acidic residues. The segment covering 117–132 (PSRHRYGARQPRARLT) has biased composition (basic residues). The tract at residues 200 to 304 (TGPPPADKEK…SSSSSSSPSN (105 aa)) is sufficient for interaction with AICDA. Residues 229-270 (CPVCKDDYALGERVRQLPCNHLFHDGCIVPWLEQHDSCPVCR) form an RING-type zinc finger. The segment at 277–311 (NTATNPPGLTGVSFSSSSSSSSSSSPSNENATSNS) is disordered. Over residues 289-311 (SFSSSSSSSSSSSPSNENATSNS) the composition is skewed to low complexity.

In terms of assembly, interacts with CCDC50, EGFR, FLT3 and SCAMP3. Interacts with BAG6 (via ubiquitin-like domain); required for BAG6-dependent ubiquitination of proteins mislocalized to the cytosol. Interacts with CDKN1A. Interacts with AICDA. In terms of processing, ubiquitinated. May undergo autoubiquitination. As to expression, highly expressed in liver and testis.

It localises to the cytoplasm. The protein resides in the nucleus. It carries out the reaction S-ubiquitinyl-[E2 ubiquitin-conjugating enzyme]-L-cysteine + [acceptor protein]-L-lysine = [E2 ubiquitin-conjugating enzyme]-L-cysteine + N(6)-ubiquitinyl-[acceptor protein]-L-lysine.. It participates in protein modification; protein ubiquitination. In terms of biological role, E3 ubiquitin-protein ligase that mediates ubiquitination oF target proteins. Depending on the associated E2 ligase, mediates 'Lys-27'-, 'Lys-29'-, 'Lys-48'- and/or 'Lys-63'-linked polyubiquitination of substrates. Part of a BAG6-dependent quality control process ensuring that proteins of the secretory pathway that are mislocalized to the cytosol are degraded by the proteasome. Probably acts by providing the ubiquitin ligase activity associated with the BAG6 complex and be responsible for ubiquitination of the hydrophobic mislocalized proteins and their targeting to the proteasome. May also play a role in the endosomal recycling of IGF2R, the cation-independent mannose-6-phosphate receptor. May play a role in the endosomal sorting and degradation of several membrane receptors including EGFR, FLT3, MET and CXCR4, by mediating their ubiquitination. By ubiquitinating CDKN1A/p21 and targeting it for degradation, may also promote cell proliferation. May monoubiquitinate AICDA. Acts as a regulator of DNA repair by mediating 'Lys-27'- and 'Lys-29'-linked polyubiquitination of MRE11, thereby promoting the exonuclease activity of MRE11. The polypeptide is E3 ubiquitin-protein ligase RNF126 (Homo sapiens (Human)).